The sequence spans 402 residues: B3 domain-containing protein LFL1 (402 aa).

The interval 1-174 (MRGEERWQEQ…AAPRPSSHHT (174 aa)) is disordered. The segment covering 74–87 (ARPPTLAASAAAAS) has biased composition (low complexity). Over residues 88-102 (SPPPPPPPPIPPLPP) the composition is skewed to pro residues. 2 stretches are compositionally biased toward low complexity: residues 103–139 (STSTSAARPTDMAGVTSKRRSSSASTSSSSGDGAAVS) and 156–169 (PRPAASLRPAAPRP). The segment at residues 181-284 (LQKELRYSDV…RFVIGAKKAG (104 aa)) is a DNA-binding region (TF-B3). The segment at 381–402 (LHVTDDKSGHSLIPNPKSGPHM) is disordered.

In terms of tissue distribution, expressed in anthers, pollen grains and young developing embryos.

The protein resides in the nucleus. Functionally, transcription repressor involved in flowering time regulation. Represses the flowering activator EHD1 by binding specifically to the DNA sequence 5'-CATGCATG-3 of its promoter. The sequence is that of B3 domain-containing protein LFL1 (LFL1) from Oryza sativa subsp. japonica (Rice).